The following is a 509-amino-acid chain: 2-isopropylmalate synthase (509 aa).

The Pyruvate carboxyltransferase domain maps to 4–266; that stretch reads VRIFDTTLRD…YTGIKTEEIY (263 aa). Asp-13, His-201, His-203, and Asn-237 together coordinate Mn(2+). A regulatory domain region spans residues 390 to 509; it reads TLDYFHISTG…FDYQAKGEKQ (120 aa).

It belongs to the alpha-IPM synthase/homocitrate synthase family. LeuA type 1 subfamily. As to quaternary structure, homodimer. It depends on Mn(2+) as a cofactor.

It is found in the cytoplasm. The catalysed reaction is 3-methyl-2-oxobutanoate + acetyl-CoA + H2O = (2S)-2-isopropylmalate + CoA + H(+). It participates in amino-acid biosynthesis; L-leucine biosynthesis; L-leucine from 3-methyl-2-oxobutanoate: step 1/4. Functionally, catalyzes the condensation of the acetyl group of acetyl-CoA with 3-methyl-2-oxobutanoate (2-ketoisovalerate) to form 3-carboxy-3-hydroxy-4-methylpentanoate (2-isopropylmalate). This Carboxydothermus hydrogenoformans (strain ATCC BAA-161 / DSM 6008 / Z-2901) protein is 2-isopropylmalate synthase.